The sequence spans 572 residues: Mitochondrial distribution and morphology protein 34 (572 aa).

The SMP-LTD domain occupies 1–195; the sequence is MAFNFNWSPL…LPAIIHRLSL (195 aa). Disordered stretches follow at residues 208-236, 296-405, 455-518, and 551-572; these read LQTQTESANGEGPGQDPLASPPQDPVDAL, PSDQ…CSAP, RDTA…PFIN, and NACGPFWDRHSQEESPPPAYGH. Residues 296-347 are compositionally biased toward polar residues; the sequence is PSDQTDASGGVTSPFSPVLSRTQSQVGSMSSFPDSASMVSNQSRSSTPSHTF. Residues 358-370 are compositionally biased toward basic residues; it reads RHSKAHARKRKKR. Residues 371–381 show a composition bias toward basic and acidic residues; that stretch reads VVDLRRPKTTD. 2 stretches are compositionally biased toward polar residues: residues 387–401 and 498–511; these read SDESAFTESTSTPSI and ATGSSAGSSRQLPS.

Belongs to the MDM34 family. In terms of assembly, component of the ER-mitochondria encounter structure (ERMES) or MDM complex, composed of mmm1, mdm10, mdm12 and mdm34.

The protein resides in the mitochondrion outer membrane. Its function is as follows. Component of the ERMES/MDM complex, which serves as a molecular tether to connect the endoplasmic reticulum (ER) and mitochondria. Components of this complex are involved in the control of mitochondrial shape and protein biogenesis, and function in nonvesicular lipid trafficking between the ER and mitochondria. Mdm34 is required for the interaction of the ER-resident membrane protein mmm1 and the outer mitochondrial membrane-resident beta-barrel protein mdm10. This Neosartorya fischeri (strain ATCC 1020 / DSM 3700 / CBS 544.65 / FGSC A1164 / JCM 1740 / NRRL 181 / WB 181) (Aspergillus fischerianus) protein is Mitochondrial distribution and morphology protein 34.